Consider the following 336-residue polypeptide: Glucokinase (336 aa).

12-17 (ADIGGT) is an ATP binding site.

It belongs to the bacterial glucokinase family.

It is found in the cytoplasm. It carries out the reaction D-glucose + ATP = D-glucose 6-phosphate + ADP + H(+). The sequence is that of Glucokinase from Helicobacter acinonychis (strain Sheeba).